A 545-amino-acid polypeptide reads, in one-letter code: Chaperonin GroEL 1 (545 aa).

ATP is bound by residues 30–33, lysine 51, 87–91, glycine 415, and aspartate 495; these read TLGP and DGTTT.

Belongs to the chaperonin (HSP60) family. Forms a cylinder of 14 subunits composed of two heptameric rings stacked back-to-back. Interacts with the co-chaperonin GroES.

It localises to the cytoplasm. The enzyme catalyses ATP + H2O + a folded polypeptide = ADP + phosphate + an unfolded polypeptide.. Functionally, together with its co-chaperonin GroES, plays an essential role in assisting protein folding. The GroEL-GroES system forms a nano-cage that allows encapsulation of the non-native substrate proteins and provides a physical environment optimized to promote and accelerate protein folding. The sequence is that of Chaperonin GroEL 1 from Rhizobium meliloti (strain 1021) (Ensifer meliloti).